We begin with the raw amino-acid sequence, 608 residues long: UvrABC system protein C (608 aa).

Residues 18–96 (NQPGVYRMYN…IKKYKPRYNV (79 aa)) form the GIY-YIG domain. A UVR domain is found at 206-241 (KQVIDSLVQHMERASTDLRFEAAARYRDQISALNKV).

The protein belongs to the UvrC family. In terms of assembly, interacts with UvrB in an incision complex.

It localises to the cytoplasm. Its function is as follows. The UvrABC repair system catalyzes the recognition and processing of DNA lesions. UvrC both incises the 5' and 3' sides of the lesion. The N-terminal half is responsible for the 3' incision and the C-terminal half is responsible for the 5' incision. The sequence is that of UvrABC system protein C from Pseudoalteromonas atlantica (strain T6c / ATCC BAA-1087).